We begin with the raw amino-acid sequence, 279 residues long: HTH-type transcriptional regulator BhcR (279 aa).

The span at 1 to 13 (MSVQIRKRGRPRG) shows a compositional bias: basic residues. Residues 1 to 21 (MSVQIRKRGRPRGRAGGLGAE) are disordered. The 62-residue stretch at 26–87 (IRALDRALDI…SQTQAWHVGP (62 aa)) folds into the HTH iclR-type domain. The segment at residues 47–66 (LTEIAQRLDMAPSTVHRVLV) is a DNA-binding region (H-T-H motif). One can recognise an IclR-ED domain in the interval 102–271 (LVERARPLLR…ARELSFGMAP (170 aa)).

Transcriptional regulator of the bhc gene cluster involved in glycolate and glyoxylate assimilation via the beta-hydroxyaspartate cycle (BHAC). Glyoxylate negatively affects the interaction of BhcR with the promoter region of the bhc gene cluster. In Paracoccus denitrificans (strain Pd 1222), this protein is HTH-type transcriptional regulator BhcR.